The chain runs to 194 residues: Porimin (194 aa).

An N-terminal signal peptide occupies residues 1 to 24; that stretch reads MALCARAALLLGALQVLALPGAVA. The Extracellular portion of the chain corresponds to 25–151; sequence QETYAQGSPS…PTKGKGSKFD (127 aa). N-linked (GlcNAc...) asparagine glycosylation is found at Asn-36, Asn-47, Asn-51, Asn-59, Asn-76, and Asn-114. The interval 88–124 is disordered; sequence KVSTPGVSPHVTPSASKSTPKTSASPNSTQTSASMTT. A compositionally biased stretch (low complexity) spans 99–124; it reads TPSASKSTPKTSASPNSTQTSASMTT. Residues 152-172 form a helical membrane-spanning segment; sequence AGSFVGGIVLTLGVLSILYIG. Residues 173–194 are Cytoplasmic-facing; the sequence is CKMYYSRRGIRYRSIDEHDAII. Ser-186 is subject to Phosphoserine.

Belongs to the CD164 family.

It is found in the membrane. Functionally, implicated in oncotic cell death, characterized by cell swelling, organelle swelling, vacuolization and increased membrane permeability. The protein is Porimin (Tmem123) of Rattus norvegicus (Rat).